The sequence spans 255 residues: MLKIGPYEMESRLLLGTGKFDNEEIQTKAIEASGTDVLTFAVRRMNLYDKNLPNPLANVNLKDFVTFPNTAGAKTVDEAIRIAEIAKHAGVCDMIKVEIIGDDETLLPDPIATYEACEILLERGYIVCPYIAEDVVLAKRLEELGVHAVMPLASPIGTGRGINNPLNLSYIVKNANVPIIVDAGIGSAKDAAEAMELGADAVLLNSAVSRAKDPVKMAEAMKLGIEAGRLSYEAGRIPVKYTAQASSPSEGLGFL.

Lys-96 serves as the catalytic Schiff-base intermediate with DXP. 1-deoxy-D-xylulose 5-phosphate-binding positions include Gly-157, 183 to 184 (AG), and 205 to 206 (NS).

The protein belongs to the ThiG family. In terms of assembly, homotetramer. Forms heterodimers with either ThiH or ThiS.

The protein resides in the cytoplasm. It catalyses the reaction [ThiS sulfur-carrier protein]-C-terminal-Gly-aminoethanethioate + 2-iminoacetate + 1-deoxy-D-xylulose 5-phosphate = [ThiS sulfur-carrier protein]-C-terminal Gly-Gly + 2-[(2R,5Z)-2-carboxy-4-methylthiazol-5(2H)-ylidene]ethyl phosphate + 2 H2O + H(+). Its pathway is cofactor biosynthesis; thiamine diphosphate biosynthesis. Its function is as follows. Catalyzes the rearrangement of 1-deoxy-D-xylulose 5-phosphate (DXP) to produce the thiazole phosphate moiety of thiamine. Sulfur is provided by the thiocarboxylate moiety of the carrier protein ThiS. In vitro, sulfur can be provided by H(2)S. This is Thiazole synthase from Staphylococcus carnosus (strain TM300).